The chain runs to 133 residues: Ribonuclease P protein component (133 aa).

It belongs to the RnpA family. Consists of a catalytic RNA component (M1 or rnpB) and a protein subunit.

The enzyme catalyses Endonucleolytic cleavage of RNA, removing 5'-extranucleotides from tRNA precursor.. Functionally, RNaseP catalyzes the removal of the 5'-leader sequence from pre-tRNA to produce the mature 5'-terminus. It can also cleave other RNA substrates such as 4.5S RNA. The protein component plays an auxiliary but essential role in vivo by binding to the 5'-leader sequence and broadening the substrate specificity of the ribozyme. The sequence is that of Ribonuclease P protein component from Pseudomonas putida (strain ATCC 47054 / DSM 6125 / CFBP 8728 / NCIMB 11950 / KT2440).